A 271-amino-acid polypeptide reads, in one-letter code: Putative pyruvate, phosphate dikinase regulatory protein 1 (271 aa).

Residue 156 to 163 (GVSRTSKT) coordinates ADP.

Belongs to the pyruvate, phosphate/water dikinase regulatory protein family. PDRP subfamily.

It carries out the reaction N(tele)-phospho-L-histidyl/L-threonyl-[pyruvate, phosphate dikinase] + ADP = N(tele)-phospho-L-histidyl/O-phospho-L-threonyl-[pyruvate, phosphate dikinase] + AMP + H(+). The catalysed reaction is N(tele)-phospho-L-histidyl/O-phospho-L-threonyl-[pyruvate, phosphate dikinase] + phosphate + H(+) = N(tele)-phospho-L-histidyl/L-threonyl-[pyruvate, phosphate dikinase] + diphosphate. In terms of biological role, bifunctional serine/threonine kinase and phosphorylase involved in the regulation of the pyruvate, phosphate dikinase (PPDK) by catalyzing its phosphorylation/dephosphorylation. This Staphylococcus saprophyticus subsp. saprophyticus (strain ATCC 15305 / DSM 20229 / NCIMB 8711 / NCTC 7292 / S-41) protein is Putative pyruvate, phosphate dikinase regulatory protein 1.